The chain runs to 335 residues: Replication factor C subunit 4 (335 aa).

ATP is bound at residue 56-63 (SGPPGTGK).

Belongs to the activator 1 small subunits family. Heterotetramer of subunits RFC2, RFC3, RFC4 and RFC5 that can form a complex with RFC1. Expressed in roots, leaves, shoot apical meristem (SAM), flag leaves and panicles.

It is found in the nucleus. Its function is as follows. May be involved in DNA replication and thus regulate cell proliferation. The polypeptide is Replication factor C subunit 4 (RFC4) (Oryza sativa subsp. japonica (Rice)).